A 313-amino-acid polypeptide reads, in one-letter code: Dihydroorotate dehydrogenase (fumarate) (313 aa).

FMN is bound by residues alanine 20 and 44–45 (KS). Residues lysine 44, 68-72 (NSMGL), and asparagine 128 contribute to the substrate site. An FMN-binding site is contributed by asparagine 128. Cysteine 131 acts as the Nucleophile in catalysis. A substrate-binding site is contributed by asparagine 133. FMN-binding residues include lysine 165 and valine 194. 195–196 (NS) lines the substrate pocket. Residues glycine 223, cysteine 249, 249-251 (CGG), and 272-273 (GT) contribute to the FMN site.

The protein belongs to the dihydroorotate dehydrogenase family. Type 1 subfamily. Homodimer. FMN serves as cofactor.

It localises to the cytoplasm. It catalyses the reaction (S)-dihydroorotate + fumarate = orotate + succinate. Its pathway is pyrimidine metabolism; UMP biosynthesis via de novo pathway. In terms of biological role, catalyzes the conversion of dihydroorotate to orotate with fumarate as the electron acceptor. Molecular oxygen can replace fumarate in vitro. This Trypanosoma brucei brucei (strain 927/4 GUTat10.1) protein is Dihydroorotate dehydrogenase (fumarate).